Consider the following 99-residue polypeptide: Aspartyl/glutamyl-tRNA(Asn/Gln) amidotransferase subunit C (99 aa).

Belongs to the GatC family. In terms of assembly, heterotrimer of A, B and C subunits.

It catalyses the reaction L-glutamyl-tRNA(Gln) + L-glutamine + ATP + H2O = L-glutaminyl-tRNA(Gln) + L-glutamate + ADP + phosphate + H(+). The enzyme catalyses L-aspartyl-tRNA(Asn) + L-glutamine + ATP + H2O = L-asparaginyl-tRNA(Asn) + L-glutamate + ADP + phosphate + 2 H(+). In terms of biological role, allows the formation of correctly charged Asn-tRNA(Asn) or Gln-tRNA(Gln) through the transamidation of misacylated Asp-tRNA(Asn) or Glu-tRNA(Gln) in organisms which lack either or both of asparaginyl-tRNA or glutaminyl-tRNA synthetases. The reaction takes place in the presence of glutamine and ATP through an activated phospho-Asp-tRNA(Asn) or phospho-Glu-tRNA(Gln). This Burkholderia vietnamiensis (strain G4 / LMG 22486) (Burkholderia cepacia (strain R1808)) protein is Aspartyl/glutamyl-tRNA(Asn/Gln) amidotransferase subunit C.